Here is a 190-residue protein sequence, read N- to C-terminus: Isopentenyl-diphosphate Delta-isomerase (190 aa).

Mn(2+) is bound by residues histidine 27 and histidine 34. The Nudix hydrolase domain maps to 32-166 (ALHLAFSCHV…PWAFSPWLTL (135 aa)). Cysteine 69 is a catalytic residue. A Mn(2+)-binding site is contributed by histidine 71. Position 89 (glutamate 89) interacts with Mg(2+). Positions 116 and 118 each coordinate Mn(2+). The active site involves glutamate 118.

This sequence belongs to the IPP isomerase type 1 family. Mg(2+) serves as cofactor. The cofactor is Mn(2+).

It localises to the cytoplasm. The enzyme catalyses isopentenyl diphosphate = dimethylallyl diphosphate. The protein operates within isoprenoid biosynthesis; dimethylallyl diphosphate biosynthesis; dimethylallyl diphosphate from isopentenyl diphosphate: step 1/1. Its function is as follows. Catalyzes the 1,3-allylic rearrangement of the homoallylic substrate isopentenyl (IPP) to its highly electrophilic allylic isomer, dimethylallyl diphosphate (DMAPP). The chain is Isopentenyl-diphosphate Delta-isomerase from Clavibacter sepedonicus (Clavibacter michiganensis subsp. sepedonicus).